A 226-amino-acid chain; its full sequence is Uridylate kinase (226 aa).

Position 9–13 (9–13 (KVSGK)) interacts with ATP. Gly-46 contacts UMP. Gly-47 and Arg-51 together coordinate ATP. UMP-binding positions include Asp-68 and 116–122 (FQPGQST). ATP is bound by residues Thr-142, Tyr-148, and Asp-151.

It belongs to the UMP kinase family. In terms of assembly, homohexamer.

The protein localises to the cytoplasm. The catalysed reaction is UMP + ATP = UDP + ADP. Its pathway is pyrimidine metabolism; CTP biosynthesis via de novo pathway; UDP from UMP (UMPK route): step 1/1. Inhibited by UTP. Functionally, catalyzes the reversible phosphorylation of UMP to UDP. The polypeptide is Uridylate kinase (Hyperthermus butylicus (strain DSM 5456 / JCM 9403 / PLM1-5)).